The following is an 892-amino-acid chain: Alanine--tRNA ligase (892 aa).

4 residues coordinate Zn(2+): histidine 594, histidine 598, cysteine 702, and histidine 706.

This sequence belongs to the class-II aminoacyl-tRNA synthetase family. Requires Zn(2+) as cofactor.

The protein localises to the cytoplasm. It catalyses the reaction tRNA(Ala) + L-alanine + ATP = L-alanyl-tRNA(Ala) + AMP + diphosphate. Functionally, catalyzes the attachment of alanine to tRNA(Ala) in a two-step reaction: alanine is first activated by ATP to form Ala-AMP and then transferred to the acceptor end of tRNA(Ala). Also edits incorrectly charged Ser-tRNA(Ala) and Gly-tRNA(Ala) via its editing domain. This chain is Alanine--tRNA ligase, found in Pyrobaculum neutrophilum (strain DSM 2338 / JCM 9278 / NBRC 100436 / V24Sta) (Thermoproteus neutrophilus).